The primary structure comprises 99 residues: Gibberellin-regulated protein 3 (99 aa).

A signal peptide spans 1–26 (MAIFRSTLVLLLILFCLTTFELHVHA).

Belongs to the GASA family. Six disulfide bonds may be present. Expressed in siliques, dry seeds and vasculature of roots and rosette leaves.

It localises to the secreted. In terms of biological role, gibberellin-regulated protein that may function in hormonal controlled steps of development such as seed germination, flowering and seed maturation. The protein is Gibberellin-regulated protein 3 (GASA3) of Arabidopsis thaliana (Mouse-ear cress).